We begin with the raw amino-acid sequence, 341 residues long: tRNA N6-adenosine threonylcarbamoyltransferase (341 aa).

Residues His115 and His119 each coordinate Fe cation. Residues Leu138–Gly142, Asp171, Gly184, and Asn276 each bind substrate. Asp304 lines the Fe cation pocket.

It belongs to the KAE1 / TsaD family. Requires Fe(2+) as cofactor.

It is found in the cytoplasm. The catalysed reaction is L-threonylcarbamoyladenylate + adenosine(37) in tRNA = N(6)-L-threonylcarbamoyladenosine(37) in tRNA + AMP + H(+). In terms of biological role, required for the formation of a threonylcarbamoyl group on adenosine at position 37 (t(6)A37) in tRNAs that read codons beginning with adenine. Is involved in the transfer of the threonylcarbamoyl moiety of threonylcarbamoyl-AMP (TC-AMP) to the N6 group of A37, together with TsaE and TsaB. TsaD likely plays a direct catalytic role in this reaction. This is tRNA N6-adenosine threonylcarbamoyltransferase from Stenotrophomonas maltophilia (strain R551-3).